The primary structure comprises 165 residues: Small ribosomal subunit protein uS5 (165 aa).

Positions L13–V76 constitute an S5 DRBM domain.

The protein belongs to the universal ribosomal protein uS5 family. In terms of assembly, part of the 30S ribosomal subunit. Contacts proteins S4 and S8.

In terms of biological role, with S4 and S12 plays an important role in translational accuracy. Located at the back of the 30S subunit body where it stabilizes the conformation of the head with respect to the body. The chain is Small ribosomal subunit protein uS5 from Oenococcus oeni (strain ATCC BAA-331 / PSU-1).